The following is a 193-amino-acid chain: L-2,4-diaminobutyric acid acetyltransferase (193 aa).

Residues 1–22 are disordered; it reads MSLQTLSTPTAEPVEEPRPVEA. The 153-residue stretch at 33-185 folds into the N-acetyltransferase domain; it reads ALLRAPQLGD…EHAPEDLYRI (153 aa).

It belongs to the acetyltransferase family. EctA subfamily.

It catalyses the reaction L-2,4-diaminobutanoate + acetyl-CoA = (2S)-4-acetamido-2-aminobutanoate + CoA + H(+). It participates in amine and polyamine biosynthesis; ectoine biosynthesis; L-ectoine from L-aspartate 4-semialdehyde: step 2/3. Its function is as follows. Catalyzes the acetylation of L-2,4-diaminobutyrate (DABA) to gamma-N-acetyl-alpha,gamma-diaminobutyric acid (ADABA) with acetyl coenzyme A. The protein is L-2,4-diaminobutyric acid acetyltransferase (ectA) of Nocardia farcinica (strain IFM 10152).